The primary structure comprises 190 residues: Dynactin subunit 6 (190 aa).

The residue at position 186 (T186) is a Phosphothreonine; by CDK1.

This sequence belongs to the dynactin subunits 5/6 family. Dynactin subunit 6 subfamily. In terms of assembly, subunit of dynactin, a multiprotein complex part of a tripartite complex with dynein and a adapter, such as BICDL1, BICD2 or HOOK3. The dynactin complex is built around ACTR1A/ACTB filament and consists of an actin-related filament composed of a shoulder domain, a pointed end and a barbed end. Its length is defined by its flexible shoulder domain. The soulder is composed of 2 DCTN1 subunits, 4 DCTN2 and 2 DCTN3. The 4 DCNT2 (via N-terminus) bind the ACTR1A filament and act as molecular rulers to determine the length. The pointed end is important for binding dynein-dynactin cargo adapters. Consists of 4 subunits: ACTR10, DCNT4, DCTN5 and DCTN6. Within the complex DCTN6 forms a heterodimer with DCTN5. The barbed end is composed of a CAPZA1:CAPZB heterodimers, which binds ACTR1A/ACTB filament and dynactin and stabilizes dynactin. Interacts with PLK1. Interacts with N4BP2L1. Post-translationally, phosphorylation at Thr-186 by CDK1 during mitotic prometaphase creates a binding site for PLK1 that facilitates its recruitment to kinetochores.

The protein localises to the cytoplasm. It localises to the cytoskeleton. It is found in the chromosome. The protein resides in the centromere. Its subcellular location is the kinetochore. Part of the dynactin complex that activates the molecular motor dynein for ultra-processive transport along microtubules. The sequence is that of Dynactin subunit 6 (DCTN6) from Bos taurus (Bovine).